We begin with the raw amino-acid sequence, 400 residues long: Argininosuccinate synthase (400 aa).

An ATP-binding site is contributed by 10–18 (AYSGGVDTS). Tyrosine 89 serves as a coordination point for L-citrulline. Glycine 119 serves as a coordination point for ATP. 3 residues coordinate L-aspartate: threonine 121, asparagine 125, and aspartate 126. Residue asparagine 125 participates in L-citrulline binding. 5 residues coordinate L-citrulline: arginine 129, serine 177, serine 186, glutamate 262, and tyrosine 274.

This sequence belongs to the argininosuccinate synthase family. Type 1 subfamily. As to quaternary structure, homotetramer.

Its subcellular location is the cytoplasm. The catalysed reaction is L-citrulline + L-aspartate + ATP = 2-(N(omega)-L-arginino)succinate + AMP + diphosphate + H(+). The protein operates within amino-acid biosynthesis; L-arginine biosynthesis; L-arginine from L-ornithine and carbamoyl phosphate: step 2/3. The polypeptide is Argininosuccinate synthase (Synechococcus sp. (strain JA-2-3B'a(2-13)) (Cyanobacteria bacterium Yellowstone B-Prime)).